The following is a 94-amino-acid chain: Large ribosomal subunit protein bL25 (94 aa).

It belongs to the bacterial ribosomal protein bL25 family. Part of the 50S ribosomal subunit; part of the 5S rRNA/L5/L18/L25 subcomplex. Contacts the 5S rRNA. Binds to the 5S rRNA independently of L5 and L18.

This is one of the proteins that binds to the 5S RNA in the ribosome where it forms part of the central protuberance. This chain is Large ribosomal subunit protein bL25, found in Pectobacterium atrosepticum (strain SCRI 1043 / ATCC BAA-672) (Erwinia carotovora subsp. atroseptica).